Reading from the N-terminus, the 324-residue chain is NADH-ubiquinone oxidoreductase chain 1 (324 aa).

Transmembrane regions (helical) follow at residues 9–29, 75–95, 106–126, 146–166, 177–197, 237–257, 259–279, and 299–319; these read VLNP…LTLL, FLFL…WAPM, LGVL…LGSG, ISYE…TGGF, SIWL…STLA, ILLM…IPAL, ELTA…FLWV, and FLPM…ALAG.

This sequence belongs to the complex I subunit 1 family.

The protein resides in the mitochondrion inner membrane. The catalysed reaction is a ubiquinone + NADH + 5 H(+)(in) = a ubiquinol + NAD(+) + 4 H(+)(out). Its function is as follows. Core subunit of the mitochondrial membrane respiratory chain NADH dehydrogenase (Complex I) that is believed to belong to the minimal assembly required for catalysis. Complex I functions in the transfer of electrons from NADH to the respiratory chain. The immediate electron acceptor for the enzyme is believed to be ubiquinone. The chain is NADH-ubiquinone oxidoreductase chain 1 (MT-ND1) from Thymallus arcticus (Arctic grayling).